Here is a 393-residue protein sequence, read N- to C-terminus: Chorismate synthase (393 aa).

NADP(+)-binding residues include Arg-40 and Arg-46. FMN contacts are provided by residues 129-131 (RSS), 249-250 (QA), Gly-301, 316-320 (KPIPT), and Arg-342.

Belongs to the chorismate synthase family. Homotetramer. FMNH2 is required as a cofactor.

It catalyses the reaction 5-O-(1-carboxyvinyl)-3-phosphoshikimate = chorismate + phosphate. It functions in the pathway metabolic intermediate biosynthesis; chorismate biosynthesis; chorismate from D-erythrose 4-phosphate and phosphoenolpyruvate: step 7/7. In terms of biological role, catalyzes the anti-1,4-elimination of the C-3 phosphate and the C-6 proR hydrogen from 5-enolpyruvylshikimate-3-phosphate (EPSP) to yield chorismate, which is the branch point compound that serves as the starting substrate for the three terminal pathways of aromatic amino acid biosynthesis. This reaction introduces a second double bond into the aromatic ring system. The sequence is that of Chorismate synthase from Geobacter metallireducens (strain ATCC 53774 / DSM 7210 / GS-15).